The primary structure comprises 223 residues: MFPFKVSKWMGLACLRSLVLPSPSIRQKKLIHKLQEEKAFREEMKIFHEKIEDFREEIWEFRGKIRAFRGQILGFWEEERPFWEEEKIFWKEEKTFWEMEKSFREEEKTFWKKYRTFWKEDKAFWREDNALWERDRNLLQEDKALWEEEKALWVEERALLAEEKALWEDKKSLWEEENALWEEEKALWVEGGGFHLLGEQRHQNGPYNANEEPQSTSFPRGRA.

Residues 129–153 (NALWERDRNLLQEDKALWEEEKALW) adopt a coiled-coil conformation. Positions 199–223 (EQRHQNGPYNANEEPQSTSFPRGRA) are disordered. The span at 203–223 (QNGPYNANEEPQSTSFPRGRA) shows a compositional bias: polar residues.

This chain is Coiled-coil domain-containing protein 70, found in Mus musculus (Mouse).